The sequence spans 399 residues: Na(+)/H(+) antiporter NhaA (399 aa).

11 helical membrane-spanning segments follow: residues L12 to N32, L60 to I80, L94 to A114, G126 to G146, I155 to F175, A178 to L198, L206 to H226, P263 to A283, G284 to L304, G336 to F356, and L372 to S392.

It belongs to the NhaA Na(+)/H(+) (TC 2.A.33) antiporter family.

It is found in the cell inner membrane. The catalysed reaction is Na(+)(in) + 2 H(+)(out) = Na(+)(out) + 2 H(+)(in). Functionally, na(+)/H(+) antiporter that extrudes sodium in exchange for external protons. The protein is Na(+)/H(+) antiporter NhaA of Rhodospirillum rubrum (strain ATCC 11170 / ATH 1.1.1 / DSM 467 / LMG 4362 / NCIMB 8255 / S1).